A 333-amino-acid chain; its full sequence is Alpha-N-acetylgalactosaminide alpha-2,6-sialyltransferase 6 (333 aa).

Over residues 1–12 (MACSRPPSQCEP) the composition is skewed to polar residues. A disordered region spans residues 1–26 (MACSRPPSQCEPTSLPPGPPAGRRHL). Residues 1–43 (MACSRPPSQCEPTSLPPGPPAGRRHLPLSRRRREMSSNKEQRS) are Cytoplasmic-facing. Residues 44–64 (AVFVILFALITILILYSSNSA) traverse the membrane as a helical; Signal-anchor for type II membrane protein segment. Over 65-333 (NEVFHYGSLR…GITFSHPSWT (269 aa)) the chain is Lumenal. A glycan (N-linked (GlcNAc...) asparagine) is linked at N98. C108 and C256 are joined by a disulfide.

The protein belongs to the glycosyltransferase 29 family. As to expression, expressed in kidney, in proximal tubule epithelial cells. Expressed in colon cell lines.

The protein resides in the golgi apparatus membrane. The enzyme catalyses a ganglioside GM1b (d18:1(4E)) + CMP-N-acetyl-beta-neuraminate = a ganglioside GD1alpha (d18:1(4E)) + CMP + H(+). It carries out the reaction N-acetyl-alpha-neuraminosyl-(2-&gt;3)-beta-D-galactosyl-(1-&gt;3)-N-acetyl-beta-D-glucosaminyl-(1-&gt;3)-beta-D-galactosyl-(1-&gt;4)-beta-D-glucosyl-(1&lt;-&gt;1')-N-acyl-sphing-4-enine + CMP-N-acetyl-beta-neuraminate = N-acetyl-alpha-neuraminosyl-(2-&gt;3)-beta-D-galactosyl-(1-&gt;3)-[N-acetyl-alpha-neuraminosyl-(2-&gt;6)]-N-acetyl-beta-D-glucosaminyl-(1-&gt;3)-beta-D-galactosyl-(1-&gt;4)-beta-D-glucosyl-(1&lt;-&gt;1')-N-acyl-sphing-4-enine + CMP + H(+). It catalyses the reaction a globoside MSGG + CMP-N-acetyl-beta-neuraminate = a globoside DSGG + CMP + H(+). The catalysed reaction is a ganglioside GD1a (d18:1(4E)) + CMP-N-acetyl-beta-neuraminate = a ganglioside GT1aalpha (d18:1(4E)) + CMP + H(+). The enzyme catalyses a ganglioside GT1b (d18:1(4E)) + CMP-N-acetyl-beta-neuraminate = a ganglioside GQ1balpha (d18:1(4E)) + CMP + H(+). It carries out the reaction 3-O-[alpha-Neu5Ac-(2-&gt;3)-beta-D-Gal-(1-&gt;3)-alpha-D-GalNAc]-L-Ser-[protein] + CMP-N-acetyl-beta-neuraminate = a 3-O-{alpha-Neu5Ac-(2-&gt;3)-beta-D-Gal-(1-&gt;3)-[alpha-Neu5Ac-(2-&gt;6)]-alpha-D-GalNAc}-L-seryl-[protein] + CMP + H(+). It catalyses the reaction 3-O-[alpha-Neu5Ac-(2-&gt;3)-beta-D-Gal-(1-&gt;3)-alpha-D-GalNAc]-L-Thr-[protein] + CMP-N-acetyl-beta-neuraminate = a 3-O-{alpha-Neu5Ac-(2-&gt;3)-beta-D-Gal-(1-&gt;3)-[alpha-Neu5Ac-(2-&gt;6)]-alpha-D-GalNAc}-L-threonyl-[protein] + CMP + H(+). Its function is as follows. Transfers the sialyl group (N-acetyl-alpha-neuraminyl or NeuAc) from CMP-NeuAc onto glycoproteins and glycolipids, forming an alpha-2,6-linkage. Produces branched type disialyl structures by transfer of a sialyl group onto the GalNAc or GlcNAc residue inside backbone core chains having a terminal sialic acid with an alpha-2,3-linkage on Gal. ST6GalNAcVI prefers glycolipids to glycoproteins, predominantly catalyzing the biosynthesis of ganglioside GD1alpha from GM1b. Besides GMb1, MSGG and other glycolipids, it shows activity towards sialyl Lc4Cer generating disialyl Lc4Cer, which can lead to the synthesis of disialyl Lewis a (Le(a)), suggested to be a cancer-associated antigen. Also has activity toward GD1a and GT1b, and can generate DSGG (disialylgalactosylgloboside) from MSGG (monosialylgalactosylgloboside). The sequence is that of Alpha-N-acetylgalactosaminide alpha-2,6-sialyltransferase 6 (ST6GALNAC6) from Homo sapiens (Human).